The chain runs to 350 residues: Quinolinate phosphoribosyltransferase [decarboxylating] 1 (350 aa).

Residues R141, 172–174 (TRK), R196, K206, E239, D266, 298–300 (SGN), and 319–321 (SGA) each bind substrate.

The protein belongs to the NadC/ModD family.

The catalysed reaction is nicotinate beta-D-ribonucleotide + CO2 + diphosphate = quinolinate + 5-phospho-alpha-D-ribose 1-diphosphate + 2 H(+). It functions in the pathway alkaloid biosynthesis; nicotine biosynthesis. Its pathway is cofactor biosynthesis; NAD(+) biosynthesis; nicotinate D-ribonucleotide from quinolinate: step 1/1. Involved in the biosynthesis of pyridine alkaloid natural products, leading mainly to the production of anabasine, anatabine, nicotine and nornicotine, effective deterrents against herbivores with antiparasitic and pesticide properties (neurotoxins); nornicotine serves as the precursor in the synthesis of the carcinogen compound N'-nitrosonornicotine (NNN). Involved in the catabolism of quinolinic acid (QA). The protein is Quinolinate phosphoribosyltransferase [decarboxylating] 1 of Nicotiana glauca (Glaucous tobacco).